The sequence spans 226 residues: UPF0319 protein YpAngola_A3206 (226 aa).

An N-terminal signal peptide occupies residues 1–20; the sequence is MKLGLVAGMLAVCFSFSSVA.

Belongs to the UPF0319 family.

The sequence is that of UPF0319 protein YpAngola_A3206 from Yersinia pestis bv. Antiqua (strain Angola).